Consider the following 558-residue polypeptide: Potassium-transporting ATPase potassium-binding subunit 1 (558 aa).

A run of 12 helical transmembrane segments spans residues 1–21, 66–86, 127–147, 166–186, 245–265, 281–301, 327–347, 354–374, 377–397, 416–436, 482–502, and 531–551; these read MEII…SGYL, FNGF…WLFL, MIVM…VCIA, IVRF…ILLM, IWSN…MLFL, ALIL…LTMW, FGAG…TGSV, LTPI…VFGG, VGLM…SLMV, IVLV…LAFM, ISTG…QLMI, and IVFI…LGPI.

This sequence belongs to the KdpA family. As to quaternary structure, the system is composed of three essential subunits: KdpA, KdpB and KdpC.

The protein resides in the cell membrane. In terms of biological role, part of the high-affinity ATP-driven potassium transport (or Kdp) system, which catalyzes the hydrolysis of ATP coupled with the electrogenic transport of potassium into the cytoplasm. This subunit binds the extracellular potassium ions and delivers the ions to the membrane domain of KdpB through an intramembrane tunnel. This is Potassium-transporting ATPase potassium-binding subunit 1 from Staphylococcus aureus (strain Mu50 / ATCC 700699).